The chain runs to 1856 residues: DNA-directed RNA polymerase II subunit RPB1 (1856 aa).

Zn(2+) is bound by residues Cys66, Cys69, Cys76, His79, Cys106, Cys109, Cys149, and Cys177. Positions 256 to 268 are lid loop; the sequence is PAVVTFGSAKNQD. The segment at 314–331 is rudder loop; it reads NCIPGLPTATQKGGRPLK. Asp489, Asp491, and Asp493 together coordinate Mg(2+). Residues 827 to 839 are bridging helix; the sequence is PSEFFFHAMGGRE. Residue Lys1260 forms a Glycyl lysine isopeptide (Lys-Gly) (interchain with G-Cter in ubiquitin) linkage. Residues 1523-1856 are disordered; that stretch reads PTTGGMSPGA…PSSPTYDPNS (334 aa). Residues 1587 to 1856 are compositionally biased toward low complexity; sequence SMTSPHYSPT…PSSPTYDPNS (270 aa). 27 repeat units span residues 1593–1599, 1600–1606, 1616–1622, 1623–1629, 1630–1636, 1637–1643, 1644–1650, 1651–1657, 1658–1664, 1665–1671, 1672–1678, 1679–1685, 1686–1692, 1693–1699, 1700–1706, 1707–1713, 1720–1726, 1727–1733, 1734–1740, 1741–1747, 1748–1754, 1755–1761, 1769–1775, 1782–1788, 1789–1795, 1796–1802, and 1803–1809. The interval 1593–1816 is C-terminal domain (CTD); 28 X 7 AA approximate tandem repeats of Y-[ST]-P-[ST]-S-P-[AGKNQRST]; the sequence is YSPTSPSYSP…SPTYTPSPSE (224 aa). Residues 1810-1816 form a 28; approximate repeat; the sequence is YTPSPSE.

The protein belongs to the RNA polymerase beta' chain family. As to quaternary structure, component of the RNA polymerase II (Pol II) complex consisting of 12 subunits. Interacts with sig-7. Post-translationally, the tandem 7 residues repeats in the C-terminal domain (CTD) can be highly phosphorylated. The phosphorylation activates Pol II. Phosphorylation occurs mainly at residues 'Ser-2' and 'Ser-5' of the heptapeptide repeat and starts at the 3- to 4-cell embryonic stage. This phosphorylation also occurs in the early stages of oocyte development and is not detected in oocytes arrested at the meiotic diakinesis stage. In the somatic lineage, phosphorylation at 'Ser-2' is mediated by cdk-12 downstream of cdk-9 whereas in the germline lineage cdk-12 phosphorylates 'Ser-2' independently of cdk-9. Phosphorylation is likely mediated by cdk-7. May be dephosphorylated by fcp-1 in diakinetic oocytes and in 1-cell and 2-cell embryos. Dephosphorylated at 'Ser-5' of the heptapeptide repeats by ssup-72. The phosphorylation state is believed to result from the balanced action of site-specific CTD kinases and phosphatase, and a 'CTD code' that specifies the position of Pol II within the transcription cycle has been proposed. In terms of processing, following transcription stress, the elongating form of RNA polymerase II (RNA pol IIo) is polyubiquitinated via 'Lys-63'-linkages on Lys-1260 at DNA damage sites without leading to degradation: ubiquitination promotes RNA pol IIo backtracking to allow access by the transcription-coupled nucleotide excision repair (TC-NER) machinery. Subsequent DEF1-dependent polyubiquitination by the elongin complex via 'Lys-48'-linkages may lead to proteasome-mediated degradation; presumably at stalled RNA pol II where TC-NER has failed, to halt global transcription and enable 'last resort' DNA repair pathways.

Its subcellular location is the nucleus. It localises to the chromosome. The catalysed reaction is RNA(n) + a ribonucleoside 5'-triphosphate = RNA(n+1) + diphosphate. In terms of biological role, DNA-dependent RNA polymerase catalyzes the transcription of DNA into RNA using the four ribonucleoside triphosphates as substrates. Largest and catalytic component of RNA polymerase II which synthesizes mRNA precursors and many functional non-coding RNAs. Forms the polymerase active center together with the second largest subunit. Pol II is the central component of the basal RNA polymerase II transcription machinery. It is composed of mobile elements that move relative to each other. RPB1 is part of the core element with the central large cleft, the clamp element that moves to open and close the cleft and the jaws that are thought to grab the incoming DNA template. At the start of transcription, a single-stranded DNA template strand of the promoter is positioned within the central active site cleft of Pol II. A bridging helix emanates from RPB1 and crosses the cleft near the catalytic site and is thought to promote translocation of Pol II by acting as a ratchet that moves the RNA-DNA hybrid through the active site by switching from straight to bent conformations at each step of nucleotide addition. During transcription elongation, Pol II moves on the template as the transcript elongates. Elongation is influenced by the phosphorylation status of the C-terminal domain (CTD) of Pol II largest subunit (RPB1), which serves as a platform for assembly of factors that regulate transcription initiation, elongation, termination and mRNA processing. Involved in the transcription of several genes including those involved in embryogenesis. The protein is DNA-directed RNA polymerase II subunit RPB1 of Caenorhabditis elegans.